The primary structure comprises 573 residues: Squalene monooxygenase (573 aa).

The Cytoplasmic portion of the chain corresponds to 1–19 (MWTFLGIATFTYFYKKCGD). An interaction with MARCHF6 region spans residues 1–99 (MWTFLGIATF…EQLESKRRRK (99 aa)). Residues 20 to 40 (VTLANKELLLCVLVFLSLGLV) lie within the membrane without spanning it. At 41-573 (LSYRCRHRNG…IYSEMKYLVH (533 aa)) the chain is on the cytoplasmic side. The required for degradation in response to high membrane cholesterol levels stretch occupies residues 61–72 (QFAAFSDILSAL). The tract at residues 100–573 (EVNLSETTLT…IYSEMKYLVH (474 aa)) is sufficient for catalytic activity. FAD contacts are provided by residues 132-133 (VL), 152-153 (ER), arginine 160, arginine 233, valine 249, aspartate 407, and methionine 420. The tract at residues 515 to 573 (PLLLIRHFFSVAVYATYFCFKSEPWATKPRALFSSGAILYKACSIIFPLIYSEMKYLVH) is hydrophobic; mediates interaction with membranes.

The protein belongs to the squalene monooxygenase family. Interacts (via N-terminal domain) with MARCHF6. Interacts with SMIM22; this interaction modulates lipid droplet formation. FAD serves as cofactor. Ubiquitinated by MARCHF6 in response to high cholesterol levels in intracellular membranes, leading to proteasomal degradation. In terms of tissue distribution, detected in lever (at protein level).

Its subcellular location is the microsome membrane. It localises to the endoplasmic reticulum membrane. It catalyses the reaction squalene + reduced [NADPH--hemoprotein reductase] + O2 = (S)-2,3-epoxysqualene + oxidized [NADPH--hemoprotein reductase] + H2O + H(+). It functions in the pathway terpene metabolism; lanosterol biosynthesis; lanosterol from farnesyl diphosphate: step 2/3. Inhibited by NB-598 ((E)N-ethyl-N-(6,6-dimethyl-2-hepten-4-ynyl)-3-[(3,3'-bi-thiophen-5-yl)methoxy]benzene-methanamine). Contrary to fungal enzymes, the mammalian enzyme is only slightly inhibited by terbinafine. Catalyzes the stereospecific oxidation of squalene to (S)-2,3-epoxysqualene, and is considered to be a rate-limiting enzyme in steroid biosynthesis. The protein is Squalene monooxygenase (Sqle) of Rattus norvegicus (Rat).